Reading from the N-terminus, the 71-residue chain is ATP synthase subunit c (71 aa).

Helical transmembrane passes span 5–25 (GAAI…AIIV) and 47–67 (FIGV…GFLI).

The protein belongs to the ATPase C chain family. In terms of assembly, F-type ATPases have 2 components, F(1) - the catalytic core - and F(0) - the membrane proton channel. F(1) has five subunits: alpha(3), beta(3), gamma(1), delta(1), epsilon(1). F(0) has three main subunits: a(1), b(2) and c(10-14). The alpha and beta chains form an alternating ring which encloses part of the gamma chain. F(1) is attached to F(0) by a central stalk formed by the gamma and epsilon chains, while a peripheral stalk is formed by the delta and b chains.

It localises to the cell membrane. Its function is as follows. F(1)F(0) ATP synthase produces ATP from ADP in the presence of a proton or sodium gradient. F-type ATPases consist of two structural domains, F(1) containing the extramembraneous catalytic core and F(0) containing the membrane proton channel, linked together by a central stalk and a peripheral stalk. During catalysis, ATP synthesis in the catalytic domain of F(1) is coupled via a rotary mechanism of the central stalk subunits to proton translocation. Functionally, key component of the F(0) channel; it plays a direct role in translocation across the membrane. A homomeric c-ring of between 10-14 subunits forms the central stalk rotor element with the F(1) delta and epsilon subunits. This Alkalihalobacillus alcalophilus (Bacillus alcalophilus) protein is ATP synthase subunit c.